A 361-amino-acid polypeptide reads, in one-letter code: Peptide chain release factor 1 (361 aa).

Residue Gln-236 is modified to N5-methylglutamine.

Belongs to the prokaryotic/mitochondrial release factor family. In terms of processing, methylated by PrmC. Methylation increases the termination efficiency of RF1.

The protein resides in the cytoplasm. Peptide chain release factor 1 directs the termination of translation in response to the peptide chain termination codons UAG and UAA. This Levilactobacillus brevis (strain ATCC 367 / BCRC 12310 / CIP 105137 / JCM 1170 / LMG 11437 / NCIMB 947 / NCTC 947) (Lactobacillus brevis) protein is Peptide chain release factor 1.